The following is a 134-amino-acid chain: Large ribosomal subunit protein uL16c (134 aa).

The protein belongs to the universal ribosomal protein uL16 family. As to quaternary structure, part of the 50S ribosomal subunit.

The protein resides in the plastid. Its subcellular location is the chloroplast. The chain is Large ribosomal subunit protein uL16c from Gnetum parvifolium (Small-leaved jointfir).